The following is a 160-amino-acid chain: uncharacterized protein (160 aa).

The N-acetyltransferase domain maps to 9 to 151 (LLINYKTLEK…GENPLIWLPE (143 aa)).

This is an uncharacterized protein from Oceanobacillus iheyensis (strain DSM 14371 / CIP 107618 / JCM 11309 / KCTC 3954 / HTE831).